Consider the following 507-residue polypeptide: MNNYNKIWEIILNELSKIYSDEVFKETFSNIKKINQIEEKIIISVETEFIKNKIYKMYFEKIKKITKLKFEEKIIIEFVSEKNKKNSNFDDEKKHFENLKEKLENENQTYFSKIENNENNDEFQNNKYFETIEKEQIETKTDNDKNVEIENRKISFNKYNYGNTNPKYSFDNFVVGKSNNFAFKIAKKIAEEKKVTTNPLYIFGKAGIGKTHLIQAIGNHILKKTHSSKKVLYVKADGFIEEFTNQLRKAKMEDFNEKYRDIDLLLVDDIQIMAGATRTQMEFFKLFDYLYLNQKQIVITSDKQASELKNIMSRLTSRFEAGLMVDIQSPDFNHRLNILKKKILEFEPQNPLKIKKDVLDLIASSFVNNVREMEGALLRLLNYAQTFGYDIDINIANEALELLIKSKKSVSYDEDVLEKIKSVVSNFFNISVRDLMSKKRQQKYTLPRHIAMYLIKELKDIPYNIVGSFFKRNHSAVFKAYQKIKKNSQSDYELKKSLELILKKINS.

Residues 1 to 72 form a domain I, interacts with DnaA modulators region; it reads MNNYNKIWEI…KKITKLKFEE (72 aa). Residues 72–162 are domain II; that stretch reads EKIIIEFVSE…KISFNKYNYG (91 aa). The tract at residues 163–384 is domain III, AAA+ region; the sequence is NTNPKYSFDN…GALLRLLNYA (222 aa). The ATP site is built by Gly-207, Gly-209, Lys-210, and Thr-211. A domain IV, binds dsDNA region spans residues 385–507; the sequence is QTFGYDIDIN…LELILKKINS (123 aa).

This sequence belongs to the DnaA family. In terms of assembly, oligomerizes as a right-handed, spiral filament on DNA at oriC.

It is found in the cytoplasm. In terms of biological role, plays an essential role in the initiation and regulation of chromosomal replication. ATP-DnaA binds to the origin of replication (oriC) to initiate formation of the DNA replication initiation complex once per cell cycle. Binds the DnaA box (a 9 base pair repeat at the origin) and separates the double-stranded (ds)DNA. Forms a right-handed helical filament on oriC DNA; dsDNA binds to the exterior of the filament while single-stranded (ss)DNA is stabiized in the filament's interior. The ATP-DnaA-oriC complex binds and stabilizes one strand of the AT-rich DNA unwinding element (DUE), permitting loading of DNA polymerase. After initiation quickly degrades to an ADP-DnaA complex that is not apt for DNA replication. Binds acidic phospholipids. This chain is Chromosomal replication initiator protein DnaA, found in Onion yellows phytoplasma (strain OY-M).